The sequence spans 98 residues: Large ribosomal subunit protein bL27 (98 aa).

Residues 1-22 (MAHKKGTGSTRNGRDSNAQRLG) form a disordered region. The segment covering 7 to 19 (TGSTRNGRDSNAQ) has biased composition (polar residues).

Belongs to the bacterial ribosomal protein bL27 family.

The chain is Large ribosomal subunit protein bL27 from Nostoc punctiforme (strain ATCC 29133 / PCC 73102).